The sequence spans 191 residues: Ribonuclease HII (191 aa).

An RNase H type-2 domain is found at 7–191 (ILMAGVDEVG…YSPVADLISK (185 aa)). Aspartate 13, glutamate 14, and aspartate 103 together coordinate a divalent metal cation.

This sequence belongs to the RNase HII family. The cofactor is Mn(2+). Requires Mg(2+) as cofactor.

It is found in the cytoplasm. The enzyme catalyses Endonucleolytic cleavage to 5'-phosphomonoester.. Its function is as follows. Endonuclease that specifically degrades the RNA of RNA-DNA hybrids. This chain is Ribonuclease HII, found in Legionella pneumophila subsp. pneumophila (strain Philadelphia 1 / ATCC 33152 / DSM 7513).